A 201-amino-acid polypeptide reads, in one-letter code: Recombination protein RecR (201 aa).

A C4-type zinc finger spans residues 59–74 (CEICGNMDTENMCRIC). One can recognise a Toprim domain in the interval 82–177 (SIIAIVETVA…KISRLASGIP (96 aa)).

It belongs to the RecR family.

In terms of biological role, may play a role in DNA repair. It seems to be involved in an RecBC-independent recombinational process of DNA repair. It may act with RecF and RecO. This is Recombination protein RecR from Rickettsia conorii (strain ATCC VR-613 / Malish 7).